A 1877-amino-acid chain; its full sequence is Phosphatidylinositol 4-kinase stt4 (1877 aa).

The PIK helical domain occupies 1305-1491; it reads PDSDAASSPI…KPILDRVMDK (187 aa). Residues 1492 to 1625 are pleckstrin homology (PH) domain conferring phosphoinositide binding specificity; sequence MINSLSGEDK…EVWQSAIFKV (134 aa). The PI3K/PI4K catalytic domain occupies 1593–1861; the sequence is DPEELAVNGT…LIEQSYANKR (269 aa). The G-loop stretch occupies residues 1599-1605; the sequence is VNGTEEE. Positions 1728–1736 are catalytic loop; the sequence is QFKDRHNGN. The activation loop stretch occupies residues 1747–1771; that stretch reads HIDFGFIFDIAPGGITFESAPFKLT.

The protein belongs to the PI3/PI4-kinase family. Type III PI4K subfamily.

Its subcellular location is the cytoplasm. The enzyme catalyses a 1,2-diacyl-sn-glycero-3-phospho-(1D-myo-inositol) + ATP = a 1,2-diacyl-sn-glycero-3-phospho-(1D-myo-inositol 4-phosphate) + ADP + H(+). Functionally, acts on phosphatidylinositol (PI) in the first committed step in the production of the second messenger inositol 1,4,5,-trisphosphate. This Schizosaccharomyces pombe (strain 972 / ATCC 24843) (Fission yeast) protein is Phosphatidylinositol 4-kinase stt4 (stt4).